The chain runs to 116 residues: Large ribosomal subunit protein bL20 (116 aa).

Belongs to the bacterial ribosomal protein bL20 family.

Its function is as follows. Binds directly to 23S ribosomal RNA and is necessary for the in vitro assembly process of the 50S ribosomal subunit. It is not involved in the protein synthesizing functions of that subunit. The chain is Large ribosomal subunit protein bL20 from Bacteroides fragilis (strain ATCC 25285 / DSM 2151 / CCUG 4856 / JCM 11019 / LMG 10263 / NCTC 9343 / Onslow / VPI 2553 / EN-2).